We begin with the raw amino-acid sequence, 508 residues long: Light-independent protochlorophyllide reductase subunit B (508 aa).

Residue aspartate 36 participates in [4Fe-4S] cluster binding. Aspartate 294 serves as the catalytic Proton donor. 429–430 (GM) lines the substrate pocket.

This sequence belongs to the ChlB/BchB/BchZ family. Protochlorophyllide reductase is composed of three subunits; ChlL, ChlN and ChlB. Forms a heterotetramer of two ChlB and two ChlN subunits. The cofactor is [4Fe-4S] cluster.

It carries out the reaction chlorophyllide a + oxidized 2[4Fe-4S]-[ferredoxin] + 2 ADP + 2 phosphate = protochlorophyllide a + reduced 2[4Fe-4S]-[ferredoxin] + 2 ATP + 2 H2O. It functions in the pathway porphyrin-containing compound metabolism; chlorophyll biosynthesis (light-independent). Functionally, component of the dark-operative protochlorophyllide reductase (DPOR) that uses Mg-ATP and reduced ferredoxin to reduce ring D of protochlorophyllide (Pchlide) to form chlorophyllide a (Chlide). This reaction is light-independent. The NB-protein (ChlN-ChlB) is the catalytic component of the complex. The protein is Light-independent protochlorophyllide reductase subunit B of Thermosynechococcus vestitus (strain NIES-2133 / IAM M-273 / BP-1).